Consider the following 1391-residue polypeptide: DNA-directed RNA polymerase subunit beta (1391 aa).

This sequence belongs to the RNA polymerase beta chain family. As to quaternary structure, the RNAP catalytic core consists of 2 alpha, 1 beta, 1 beta' and 1 omega subunit. When a sigma factor is associated with the core the holoenzyme is formed, which can initiate transcription.

The enzyme catalyses RNA(n) + a ribonucleoside 5'-triphosphate = RNA(n+1) + diphosphate. Its function is as follows. DNA-dependent RNA polymerase catalyzes the transcription of DNA into RNA using the four ribonucleoside triphosphates as substrates. This chain is DNA-directed RNA polymerase subunit beta, found in Paramagnetospirillum magneticum (strain ATCC 700264 / AMB-1) (Magnetospirillum magneticum).